Reading from the N-terminus, the 188-residue chain is Guanylate kinase (188 aa).

In terms of domain architecture, Guanylate kinase-like spans 8 to 188 (GRIVVLAGPS…AVAAISEILR (181 aa)). Residue 15 to 22 (GPSAVGKS) participates in ATP binding.

It belongs to the guanylate kinase family.

The protein resides in the cytoplasm. The catalysed reaction is GMP + ATP = GDP + ADP. Its function is as follows. Essential for recycling GMP and indirectly, cGMP. This is Guanylate kinase from Corynebacterium jeikeium (strain K411).